The sequence spans 3739 residues: MESGDSGLAAQGFLGWGADEEVAQELETEEESEGEGEETAAESEEEPDARLSDEDEEGKTKQECIVSDPSFSMVAVQREDSGITWETNSSRSSTPWASGESQTSGICSLEGSALTSPPGSVSFIMDEVKRTRKRTQKSKRGSPSLRRKGSKKRNSLESQDVLTNQEDGPSISESPVLNIENEKSSIGTYDKTRRKKTASNTPPITGAIYKEHKPLVLKPVYIGTVQYKIKMFNSVKEELIPLQFYGTLPKGYVIKEIHYRRGKDSSISLEPDLSNGGSNIVPQRKLAQSPEEDKVRELAPPWRGALSKGSRTSLFSHEEQKKTYADSNLNVPSSTEHAFPSSARNDTADQEENLSLPQMMPQQPADESKTHRMEPPSIPATMVLERAKEELEQNAQGKESSEDDASVLTGSADDVQQEGLVSVNHSMPWEAEKESLETGPPRPAPAIQEKFEPDMEGLEPISTEKTEQASEYVTSSEPIVHREEEHAPEPIVHREEEHAPEPIVHREEEHAPEPESIVHREEEHAPESIVHREEEHAPEPVPIVHREEEHAPEPESIVHREEEHAPEPIVHRDKGHALEPIVHREEEHAPEPIVHRDEGHAPEPIVHREEEHVPEPESIVRKGEEHAPEPIVHREEEQVPEPESIVHREEEHAPEPIVHREEEQVPEPESIVHREEEHAPEPMVLREEHAPEPIVRREEEHAPEPIVHREEEHAPEPMVHRKAQQLERGVETSTPITDITEPEDSSLEEEIIELDYPESPLASKETSPSPLSPEVEHRKEPILPTQMTFTPERITLSEEEREENESVSTDSAFVSEYSVLQDLNHTPEKLEVEAVSVSDVKSSNEPAVFSEDDEERESYSPAMTSVSEQSLSPSTTEKTSAIQSPLFSTVSPVLSGDEASENVCHSPESESAAEYSVPAHAQELLLKTGDHKLPLKSQRVSEPIIQAEDEKEDIGLLPPAALSQAVLSEDESLGSGSFASDSKLPFKPSVSQNATRESPQKTIDDMPQFKPRGLSDPATLLEEEKEAIGVGLSSSNEVSAVECALPPQTTELLSESHAPPPWAISSEQVVQSEEGSRDQQRGSFSSTPELGHTSLLLKGASSPTGLSEQGQEEDNIGPLSPDSAFASEFSFSPYPTQELEKRELGRDSPLCLTSPSEQTVLSEEDTEEADLFSPDSASQVSIPPYRIAETEQNKVEPDELLPTRSAPDYPYFSEADEEEAGSSVVTLVPEHSEPSQEREESSPCRPVFEDLSLPPSADKTGQAETMSDVPTISTSVSEYLILARQAKTQASLEPEAEDLVPPPTSGWEKRDAKSSLPAVTIAASSSALSSVVKEETTSVLPTSQPSVSPESTCVLKPEQEPTAPLTLTSADEQMALPRVGREKAVLDSQEATAHKSQDQTPEPRLPNVPGSGMKYSVLSDLGDEPKADVKLNLAPTVTSELEQRMLSKNEPEVAKPHSPPEETSISGPKVLSAVKTEVKQESKITRELPAASSGRERGAEHSPPVPPALPALTEETGKDTEASSSATTVPVTKLDSNSTKLGRDEVLTDPSLASPVEHPGLKGIGKSELGSGLPLPSMSASEVLRPEPKLPVNSGVEVEREDNEPPPLQVSPTSKPTVPNDKHEEITRSPDSENLVSDDLAPTLLAFRHEMNRQAEETSSPVPGSFLSGEQELIKLPPEPEKHKQLSEVPTAGSELIDSRDRDRSLGIEPVKPIGTEPGPSILEKGPAELQRRGKEQEENRKLPVPASAPLETASFDLPIEQKEPKRTLHEGQAVEVPDESSSSADKPELGVKQLAEKKENLEQPKPFVTTERASVTGSKVKESLISPKDNIWMLEKPDGLVNQHEDRKPGTGQLESSESTDLMSEKLGAASLDTDHTSETRNQETSKAPVSGEKLSQEPRRVQSKAVDDSEEGRKLASGNVEVLTQSKSVPAVKAKATPQPPETPEVTQKPSEKSLVTEQGLPAEKGKKGISSFKSWMSSLLFGSSIPDSKVSDNEDLETRPGPSVEKAVPAIEPKGTVPAEVNIAEKPAVHSLPEVTVKLAEEPKGVSVKSSISQDLKEKLTFLSNEDVLKQPKSNSENYGQKELPGFSEGMGESLATSVGDKHPGIHPCSPMGEKVGMEEAQNMAPLHITESQRRQKPEVSPPSMWNISARKEEPSSDHKETWLSSSDVVDRMPQKPKSAQSAFTRMNSEEPASMILPVESKGSLSDLGEDRLRQEMPKPTSLEHCEEEVERPTEEKDGWETRSFSLAGKRGLAEKQEIMAPLELRENEAVGELQRMPESRPFKLEESKAAERLEQRISPTEKLMEKPSKTLALDRREKEVQEWVFSEGEKQEYPPAAMPVPGASAVSLDKAQPHLLAKPTPVVEKPEHIVTEVYPEIRERKAAETQPHPQEEGKTLVEKTKVSRVESPHGEETDGHSLTQEGNLELEKSGESRVDLKEERRRFVMPELPLGASVAAEDGSVQPRPLSKDAARASDMTDETKHLGTPPTQPSAVEPQTLVLGTSVEHAVKKQETWSDRPTVHTFQTSKDDTEEMLKQSVLISKHHLEAVEDVHRNEPPSSAASNYAQFMLSASEISADGVPPMGGTAQEPEGTSVKDEEFSVTSKPAGLSEDQKSAFSIISEGCEILNIHAPAFIPSVDQEESEQMQDKLQYLEEKASFKSISVHDEKKAAASHKTQKSKLEVPDRKITSLKENKTKETHKTKEEIATDSGMGDFTPIQPTVSGEEDYFEKYTLIDYNLSPGSGKQKSTVEESSEEATKTLTSFPESSAEQALDHEYNLVKLDESFYGPEKDDSKLSHAEMQKSLAIQKPDDRNAPKGISRDVDSRSPGMPLFDVEEGVLSKRQIFPTTPKAVNPELLEEPPALSFFYKDLYEGACGEKNEGETASEGDSVDSETSFPRRHSDTDDGPGMYFEKYILKDDILHDESVTQEDQGQGLEEKPVGEEDSQQLRVAEREIRRKPETSFWEKNLEEQHKVVGREGEPTGHMETLDEAAMQQKAPITEQVRAVTQKMSYAVPFQDTRCVLESEPSSQGNEAGNASPDVNLNVPVQVSFPEEESAAGATYAPEVLQERLVPSVSREERLHNTPVQDEYDFVGSLNQEAASQAILPEEPGSESSPKEVLSQGSESFEHIREQELTSEGEPRMSASQEVWDRTEDQSARESVTAKTQKEPKKTQAESYCYTCKSLVSEMDKALDIHKDHEVSALDTAISAVKVQLGEFLENLQEKSLRIEAFVSEIESFFNTIEEKCSKNEKRLEMQNEEMMKRVLAQYDEKAQSFEEVKKKKMEFLHDQMVHFLQSMDTAKDTLETIVREAEELDETVFLASFEEINERLLSAMESTASLENMPAAFSLFEHYDDSSARSDQMLKQVAVPQPPRLEPQEPSSATSTTIAVYWSVNKEDVVDSFQVYCVEEPQDDQEINELVEEYRLTVKESCCIFEDLEPDRCYQVWVMAVNFTGCSLPSERAIFRTAPSTPVIHVEDCTVCWNTATVRWRPANPEATETYTLEYCRQHSPEGEGLRSFSGIKGHQLKVNLPPNDNYFFYVRATNASGTSEQSEAALISTRGTRFLLLRETAHPALQISANGTVISFSERRRLTEIPSVLGEELPACGQHYWETTVADSPAYRLGICTSSAVRAGALGQGETSWYMHCSEPQRYTFFYSGIVSEVHATERPARVGILLDYTNQRLLFINAESGQLLFIVRHRFNEGVHPAFALEKPGRCTLHLGLEPPDSVRHK.

13 disordered regions span residues 1-205 (MESG…PPIT), 268-814 (SLEP…SAFV), 835-884 (VSVS…AIQS), 967-1270 (LSED…SDVP), 1288-1313 (TQASLEPEAEDLVPPPTSGWEKRDAK), 1325-1637 (SSAL…NLVS), 1650-1969 (EMNR…EKGK), 1986-2016 (SSIPDSKVSDNEDLETRPGPSVEKAVPAIEP), 2065-2246 (FLSN…WETR), 2273-2318 (AVGE…LALD), 2377-2498 (VYPE…SAVE), 2513-2532 (KKQETWSDRPTVHTFQTSKD), and 2579-2616 (SADGVPPMGGTAQEPEGTSVKDEEFSVTSKPAGLSEDQ). Residues 18 to 47 (ADEEVAQELETEEESEGEGEETAAESEEEP) are compositionally biased toward acidic residues. The segment covering 48–62 (DARLSDEDEEGKTKQ) has biased composition (basic and acidic residues). Residues 84 to 106 (TWETNSSRSSTPWASGESQTSGI) show a composition bias toward polar residues. A compositionally biased stretch (basic residues) spans 130–153 (RTRKRTQKSKRGSPSLRRKGSKKR). Ser-155 is subject to Phosphoserine. Composition is skewed to polar residues over residues 156–175 (LESQDVLTNQEDGPSISESP) and 325–336 (ADSNLNVPSSTE). Positions 380 to 406 (ATMVLERAKEELEQNAQGKESSEDDAS) form a coiled coil. Basic and acidic residues-rich tracts occupy residues 479–637 (IVHR…REEE), 644–663 (SIVHREEEHAPEPIVHREEE), and 670–730 (SIVH…ERGV). 2 repeat units span residues 482-493 (REEEHAPEPIVH) and 494-505 (REEEHAPEPIVH). The 20 X 12 AA approximate tandem repeats of R-[DE]-[EK]-[EG]-H-[AV]-P-E-[PS]-[IM]-V-[HLR] stretch occupies residues 482 to 720 (REEEHAPEPI…EEHAPEPMVH (239 aa)). The stretch at 506–519 (REEEHAPEPESIVH) is one 3; approximate repeat. Copy 4 of the repeat occupies 520-531 (REEEHAPESIVH). A 5; approximate repeat occupies 532–545 (REEEHAPEPVPIVH). A 6; approximate repeat occupies 546 to 559 (REEEHAPEPESIVH). A run of 4 repeats spans residues 560 to 571 (REEEHAPEPIVH), 572 to 583 (RDKGHALEPIVH), 584 to 595 (REEEHAPEPIVH), and 596 to 607 (RDEGHAPEPIVH). The stretch at 608–621 (REEEHVPEPESIVR) is one 11; approximate repeat. One copy of the 12; approximate repeat lies at 622–633 (KGEEHAPEPIVH). Residues 634 to 647 (REEEQVPEPESIVH) form a 14; approximate repeat. Repeat unit 15 spans residues 648–659 (REEEHAPEPIVH). One copy of the 16; approximate repeat lies at 660-673 (REEEQVPEPESIVH). A run of 4 repeats spans residues 674–685 (REEEHAPEPMVL), 686–696 (REEHAPEPIVR), 697–708 (REEEHAPEPIVH), and 709–720 (REEEHAPEPMVH). The segment covering 740–756 (TEPEDSSLEEEIIELDY) has biased composition (acidic residues). The residue at position 850 (Ser-850) is a Phosphoserine. 2 stretches are compositionally biased toward polar residues: residues 861–884 (PAMTSVSEQSLSPSTTEKTSAIQS) and 1151–1161 (CLTSPSEQTVL). Composition is skewed to basic and acidic residues over residues 1188–1197 (AETEQNKVEP) and 1230–1242 (EHSEPSQEREESS). Polar residues predominate over residues 1337-1351 (TSVLPTSQPSVSPES). 2 stretches are compositionally biased toward basic and acidic residues: residues 1441-1460 (LEQRMLSKNEPEVAKPHSPP) and 1476-1486 (TEVKQESKITR). The segment covering 1522–1540 (ASSSATTVPVTKLDSNSTK) has biased composition (polar residues). Basic and acidic residues-rich tracts occupy residues 1620 to 1631 (NDKHEEITRSPD), 1697 to 1706 (IDSRDRDRSL), 1726 to 1742 (GPAELQRRGKEQEENRK), 1760 to 1770 (IEQKEPKRTLH), 1786 to 1803 (DKPELGVKQLAEKKENLE), and 1836 to 1850 (EKPDGLVNQHEDRKP). Residues 1854–1863 (QLESSESTDL) show a composition bias toward polar residues. Composition is skewed to basic and acidic residues over residues 1874–1885 (DTDHTSETRNQE), 1896–1916 (LSQEPRRVQSKAVDDSEEGRK), 1992–2001 (KVSDNEDLET), and 2153–2165 (ARKEEPSSDHKET). Residues 2181-2190 (KSAQSAFTRM) show a composition bias toward polar residues. Ser-2192 is subject to Phosphoserine. Basic and acidic residues-rich tracts occupy residues 2212–2244 (GEDRLRQEMPKPTSLEHCEEEVERPTEEKDGWE), 2279–2299 (RMPESRPFKLEESKAAERLEQ), 2306–2318 (KLMEKPSKTLALD), 2377–2419 (VYPE…ETDG), and 2429–2448 (ELEKSGESRVDLKEERRRFV). Residue Ser-2411 is modified to Phosphoserine. Ser-2495 bears the Phosphoserine mark. Residues 2513-2523 (KKQETWSDRPT) are compositionally biased toward basic and acidic residues. A coiled-coil region spans residues 2640–2664 (SVDQEESEQMQDKLQYLEEKASFKS). Disordered regions lie at residues 2667–2725 (VHDE…QPTV), 2742–2773 (LSPGSGKQKSTVEESSEEATKTLTSFPESSAE), 2791–2835 (GPEK…GMPL), 2881–2959 (EKNE…EREI), 3027–3047 (LESEPSSQGNEAGNASPDVNL), and 3111–3174 (PEEP…QKEP). Basic and acidic residues predominate over residues 2682–2709 (SKLEVPDRKITSLKENKTKETHKTKEEI). A required for RYR2 clustering region spans residues 2731–3041 (YFEKYTLIDY…SSQGNEAGNA (311 aa)). Positions 2762 to 2773 (KTLTSFPESSAE) are enriched in polar residues. 2 stretches are compositionally biased toward basic and acidic residues: residues 2791-2804 (GPEKDDSKLSHAEM) and 2812-2828 (KPDDRNAPKGISRDVDS). Ser-2905 carries the post-translational modification Phosphoserine. The segment covering 2918–2929 (YILKDDILHDES) has biased composition (basic and acidic residues). A compositionally biased stretch (polar residues) spans 3030 to 3047 (EPSSQGNEAGNASPDVNL). A compositionally biased stretch (basic and acidic residues) spans 3153 to 3162 (VWDRTEDQSA). Residues 3187 to 3214 (KSLVSEMDKALDIHKDHEVSALDTAISA) form an amphipathic helix H1 region. The segment at 3215–3342 (VKVQLGEFLE…ERLLSAMEST (128 aa)) is B-box coiled-coil; BBC. Residues 3244–3323 (FNTIEEKCSK…REAEELDETV (80 aa)) are a coiled coil. An amphipathic helix H2 region spans residues 3301–3318 (SMDTAKDTLETIVREAEE). Fibronectin type-III domains follow at residues 3374 to 3475 (VPQP…TAPS) and 3476 to 3568 (TPVI…TRGT). The amphipathic helix H3 stretch occupies residues 3421–3437 (EINELVEEYRLTVKESC). The B30.2/SPRY domain maps to 3550–3735 (NASGTSEQSE…LHLGLEPPDS (186 aa)).

In terms of assembly, interacts with PRKAR2A. Interacts with ACTN2, DES and DTNBP1/dysbindin. Interacts with DMD/dystrophin. Interacts with the calcineurin catalytic subunit PPP3CA. Interacts with TTN. Interacts with CAPN3; this interaction, which results in CMYA5 proteolysis, may protect CAPN3 from autolysis. Interacts with FSD2. In cardiac muscles, identified in a complex composed of FSD2, CMYA5 and RYR2. Phosphorylated by PKA. Expressed in skin as well as in cardiac muscle. Expressed in skeletal muscle (at protein level).

The protein localises to the nucleus. It is found in the cytoplasm. The protein resides in the perinuclear region. Its subcellular location is the myofibril. It localises to the sarcomere. The protein localises to the m line. It is found in the sarcoplasmic reticulum. Its function is as follows. May serve as an anchoring protein that mediates the subcellular compartmentation of protein kinase A (PKA) via binding to PRKAR2A. May attenuate calcineurin ability to induce slow-fiber gene program in muscle and may negatively modulate skeletal muscle regeneration. Plays a role in the assembly of ryanodine receptor (RYR2) clusters in striated muscle. The chain is Cardiomyopathy-associated protein 5 (Cmya5) from Mus musculus (Mouse).